The sequence spans 511 residues: Probable cytochrome P450 4ac2 (511 aa).

Residues Glu318 and Cys455 each contribute to the heme site.

This sequence belongs to the cytochrome P450 family. Requires heme as cofactor.

The protein resides in the endoplasmic reticulum membrane. It localises to the microsome membrane. Functionally, may be involved in the metabolism of insect hormones and in the breakdown of synthetic insecticides. In Drosophila melanogaster (Fruit fly), this protein is Probable cytochrome P450 4ac2 (Cyp4ac2).